We begin with the raw amino-acid sequence, 567 residues long: Berberine bridge enzyme-like D-1 (567 aa).

The first 33 residues, 1-33, serve as a signal peptide directing secretion; that stretch reads MKRNISMFLQLLLIILMMISFLFTSLLVPSVSA. The cysteines at positions 42 and 103 are disulfide-linked. N-linked (GlcNAc...) asparagine glycosylation is present at Asn50. Residues 81–257 form the FAD-binding PCMH-type domain; it reads SKPKPTVIIV…YAWKIRLLKV (177 aa). The residue at position 118 (His118) is a Pros-8alpha-FAD histidine. N-linked (GlcNAc...) asparagine glycosylation is found at Asn364 and Asn378.

The protein belongs to the oxygen-dependent FAD-linked oxidoreductase family. FAD serves as cofactor. Mostly expressed in roots at low levels.

The protein resides in the vacuole. It functions in the pathway alkaloid biosynthesis; nicotine biosynthesis. In terms of biological role, involved in the biosynthesis of pyridine alkaloid natural products, leading mainly to the production of anabasine, anatabine, nicotine and nornicotine, effective deterrents against herbivores with antiparasitic and pesticide properties (neurotoxins); nornicotine serves as the precursor in the synthesis of the carcinogen compound N'-nitrosonornicotine (NNN). Catalyzes a late oxidation step subsequent to the pyridine ring condensation reaction in the biosynthesis of alkaloids. The sequence is that of Berberine bridge enzyme-like D-1 from Nicotiana tabacum (Common tobacco).